Reading from the N-terminus, the 327-residue chain is Aspartate--ammonia ligase (327 aa).

It belongs to the class-II aminoacyl-tRNA synthetase family. AsnA subfamily.

It localises to the cytoplasm. It catalyses the reaction L-aspartate + NH4(+) + ATP = L-asparagine + AMP + diphosphate + H(+). It functions in the pathway amino-acid biosynthesis; L-asparagine biosynthesis; L-asparagine from L-aspartate (ammonia route): step 1/1. The protein is Aspartate--ammonia ligase of Mycoplasmoides gallisepticum (strain R(low / passage 15 / clone 2)) (Mycoplasma gallisepticum).